The chain runs to 132 residues: Small ribosomal subunit protein uS8 (132 aa).

It belongs to the universal ribosomal protein uS8 family. Part of the 30S ribosomal subunit. Contacts proteins S5 and S12.

One of the primary rRNA binding proteins, it binds directly to 16S rRNA central domain where it helps coordinate assembly of the platform of the 30S subunit. In Caulobacter vibrioides (strain ATCC 19089 / CIP 103742 / CB 15) (Caulobacter crescentus), this protein is Small ribosomal subunit protein uS8.